We begin with the raw amino-acid sequence, 457 residues long: Bifunctional protein GlmU (457 aa).

The pyrophosphorylase stretch occupies residues 1 to 230 (MPLSLPLHIV…AQEVEGVNDL (230 aa)). Residues 12-15 (LAAG), Lys-26, Gln-78, 83-84 (GT), 105-107 (YGD), Gly-140, Glu-155, Asn-170, and Asn-228 each bind UDP-N-acetyl-alpha-D-glucosamine. Residue Asp-107 coordinates Mg(2+). Mg(2+) is bound at residue Asn-228. The interval 231–251 (WQLTQLERAWQIRAARALCLQ) is linker. The interval 252-457 (GARVADPARL…DGWQRPKKKT (206 aa)) is N-acetyltransferase. Residues Arg-334 and Lys-352 each coordinate UDP-N-acetyl-alpha-D-glucosamine. His-364 acts as the Proton acceptor in catalysis. The UDP-N-acetyl-alpha-D-glucosamine site is built by Tyr-367 and Asn-378. Residues Ala-381, 387 to 388 (NY), Ser-406, Ala-424, and Arg-441 each bind acetyl-CoA.

This sequence in the N-terminal section; belongs to the N-acetylglucosamine-1-phosphate uridyltransferase family. In the C-terminal section; belongs to the transferase hexapeptide repeat family. As to quaternary structure, homotrimer. Mg(2+) serves as cofactor.

Its subcellular location is the cytoplasm. The catalysed reaction is alpha-D-glucosamine 1-phosphate + acetyl-CoA = N-acetyl-alpha-D-glucosamine 1-phosphate + CoA + H(+). It carries out the reaction N-acetyl-alpha-D-glucosamine 1-phosphate + UTP + H(+) = UDP-N-acetyl-alpha-D-glucosamine + diphosphate. It functions in the pathway nucleotide-sugar biosynthesis; UDP-N-acetyl-alpha-D-glucosamine biosynthesis; N-acetyl-alpha-D-glucosamine 1-phosphate from alpha-D-glucosamine 6-phosphate (route II): step 2/2. Its pathway is nucleotide-sugar biosynthesis; UDP-N-acetyl-alpha-D-glucosamine biosynthesis; UDP-N-acetyl-alpha-D-glucosamine from N-acetyl-alpha-D-glucosamine 1-phosphate: step 1/1. It participates in bacterial outer membrane biogenesis; LPS lipid A biosynthesis. Catalyzes the last two sequential reactions in the de novo biosynthetic pathway for UDP-N-acetylglucosamine (UDP-GlcNAc). The C-terminal domain catalyzes the transfer of acetyl group from acetyl coenzyme A to glucosamine-1-phosphate (GlcN-1-P) to produce N-acetylglucosamine-1-phosphate (GlcNAc-1-P), which is converted into UDP-GlcNAc by the transfer of uridine 5-monophosphate (from uridine 5-triphosphate), a reaction catalyzed by the N-terminal domain. The protein is Bifunctional protein GlmU of Xylella fastidiosa (strain M23).